We begin with the raw amino-acid sequence, 132 residues long: MAANDKEKWGIAHIFASFNNTIITVTDLSGAETVTKSSGGMVVKQDRNESSPYAAMQMAANVAAIAREKGIVGVHVKVRAPGQGKQRSPGPGAQAAIRALARAGMRIGRIEDVTPVPHDSCRPKGGRRGRRV.

The disordered stretch occupies residues 108–132; it reads GRIEDVTPVPHDSCRPKGGRRGRRV.

This sequence belongs to the universal ribosomal protein uS11 family. In terms of assembly, part of the 30S ribosomal subunit.

Functionally, located on the platform of the 30S subunit. In Methanoregula boonei (strain DSM 21154 / JCM 14090 / 6A8), this protein is Small ribosomal subunit protein uS11.